Consider the following 360-residue polypeptide: 3-dehydroquinate synthase (360 aa).

NAD(+)-binding positions include 71-76 (DGEQYK), 105-109 (GVVGD), 129-130 (TT), Lys142, Lys151, and 169-172 (TLNT). Glu184, His248, and His265 together coordinate Zn(2+).

The protein belongs to the sugar phosphate cyclases superfamily. Dehydroquinate synthase family. Co(2+) is required as a cofactor. Zn(2+) serves as cofactor. Requires NAD(+) as cofactor.

The protein localises to the cytoplasm. The catalysed reaction is 7-phospho-2-dehydro-3-deoxy-D-arabino-heptonate = 3-dehydroquinate + phosphate. It participates in metabolic intermediate biosynthesis; chorismate biosynthesis; chorismate from D-erythrose 4-phosphate and phosphoenolpyruvate: step 2/7. Its function is as follows. Catalyzes the conversion of 3-deoxy-D-arabino-heptulosonate 7-phosphate (DAHP) to dehydroquinate (DHQ). The sequence is that of 3-dehydroquinate synthase from Coxiella burnetii (strain CbuK_Q154) (Coxiella burnetii (strain Q154)).